An 892-amino-acid chain; its full sequence is Phenylalanine--tRNA ligase beta subunit (892 aa).

Residues 39–150 enclose the tRNA-binding domain; that stretch reads NPGVEGVVVG…PGLEPGMDVA (112 aa). Residues 406-569 form the B5 domain; the sequence is AVPPVILLRT…RCEGYDAIPL (164 aa). An insert region spans residues 442 to 518; it reads VLTPADLAAD…ALLGGGESDG (77 aa). Residues Asp547, Asp553, Glu556, and Glu557 each coordinate Mg(2+). Residues 799 to 891 form the FDX-ACB domain; it reads PRFPAVTRDV…ALKALGAELR (93 aa).

Belongs to the phenylalanyl-tRNA synthetase beta subunit family. Type 1 subfamily. Tetramer of two alpha and two beta subunits. The cofactor is Mg(2+).

It localises to the cytoplasm. The catalysed reaction is tRNA(Phe) + L-phenylalanine + ATP = L-phenylalanyl-tRNA(Phe) + AMP + diphosphate + H(+). The sequence is that of Phenylalanine--tRNA ligase beta subunit from Symbiobacterium thermophilum (strain DSM 24528 / JCM 14929 / IAM 14863 / T).